A 666-amino-acid chain; its full sequence is Amyloid beta A4 precursor protein-binding family B member 1-interacting protein (666 aa).

At Ser55 the chain carries Phosphoserine. Residues 122–155 are disordered; the sequence is SQYEDDLPPPPADPVLDLPLPPPPPEPLSQEEEE. Pro residues predominate over residues 129 to 148; the sequence is PPPPADPVLDLPLPPPPPEP. One can recognise a Ras-associating domain in the interval 176 to 263; sequence KKLVVKVHMN…KILFLEKEEK (88 aa). The PH domain maps to 310–419; it reads VPELEGALYL…WVMGIRIAKY (110 aa). A disordered region spans residues 448–666; sequence AAAPAQPSTG…ALQKKRGNVS (219 aa). The segment covering 453-478 has biased composition (polar residues); the sequence is QPSTGPKTGTTQPNGQIPQATHSVSA. The span at 483 to 504 shows a compositional bias: basic and acidic residues; that stretch reads AQRHAETSKDKKPALGNHHDPA. At Ser526 the chain carries Phosphoserine. Thr528 carries the post-translational modification Phosphothreonine. Residue Ser531 is modified to Phosphoserine. 2 stretches are compositionally biased toward pro residues: residues 547–589 and 598–631; these read PAPP…PPPS and LPPP…PVPP.

This sequence belongs to the MRL family. As to quaternary structure, interacts, through the N-terminal Pro-rich region, with the WW domain of APBB1. Interacts with RAP1A, PFN1, TLN1, VASP, VCL and ENAH. As to expression, widely expressed with high expression in thymus, spleen, lymph node, bone marrow and peripheral leukocytes.

The protein localises to the cell membrane. The protein resides in the cell projection. It localises to the lamellipodium. It is found in the cell junction. Its subcellular location is the focal adhesion. The protein localises to the cytoplasm. The protein resides in the cytoskeleton. Appears to function in the signal transduction from Ras activation to actin cytoskeletal remodeling. Suppresses insulin-induced promoter activities through AP1 and SRE. Mediates Rap1-induced adhesion. This is Amyloid beta A4 precursor protein-binding family B member 1-interacting protein (APBB1IP) from Homo sapiens (Human).